The sequence spans 399 residues: Probable peptidoglycan glycosyltransferase FtsW (399 aa).

Residues M1 to P25 lie on the Cytoplasmic side of the membrane. The chain crosses the membrane as a helical span at residues L26–M46. The Periplasmic portion of the chain corresponds to S47–A64. A helical transmembrane segment spans residues I65 to W85. Residues E86 to H88 lie on the Cytoplasmic side of the membrane. A helical transmembrane segment spans residues G89–G109. Residues R110–R117 lie on the Periplasmic side of the membrane. A helical transmembrane segment spans residues W118 to L138. Topologically, residues Y139–N153 are cytoplasmic. Residues Q154–M174 form a helical membrane-spanning segment. At Q175 to D177 the chain is on the periplasmic side. The next 2 membrane-spanning stretches (helical) occupy residues F178–S198 and L199–F219. Topologically, residues S220–S281 are periplasmic. The chain crosses the membrane as a helical span at residues V282–L302. Over S303–Q326 the chain is Cytoplasmic. The chain crosses the membrane as a helical span at residues G327–L347. The Periplasmic segment spans residues P348 to T353. Residues L354–L374 traverse the membrane as a helical segment. Topologically, residues L375–A399 are cytoplasmic.

The protein belongs to the SEDS family. FtsW subfamily.

The protein localises to the cell inner membrane. The enzyme catalyses [GlcNAc-(1-&gt;4)-Mur2Ac(oyl-L-Ala-gamma-D-Glu-L-Lys-D-Ala-D-Ala)](n)-di-trans,octa-cis-undecaprenyl diphosphate + beta-D-GlcNAc-(1-&gt;4)-Mur2Ac(oyl-L-Ala-gamma-D-Glu-L-Lys-D-Ala-D-Ala)-di-trans,octa-cis-undecaprenyl diphosphate = [GlcNAc-(1-&gt;4)-Mur2Ac(oyl-L-Ala-gamma-D-Glu-L-Lys-D-Ala-D-Ala)](n+1)-di-trans,octa-cis-undecaprenyl diphosphate + di-trans,octa-cis-undecaprenyl diphosphate + H(+). The protein operates within cell wall biogenesis; peptidoglycan biosynthesis. Peptidoglycan polymerase that is essential for cell division. This is Probable peptidoglycan glycosyltransferase FtsW from Allochromatium vinosum (strain ATCC 17899 / DSM 180 / NBRC 103801 / NCIMB 10441 / D) (Chromatium vinosum).